The primary structure comprises 115 residues: Large ribosomal subunit protein bL20 (115 aa).

The protein belongs to the bacterial ribosomal protein bL20 family.

Functionally, binds directly to 23S ribosomal RNA and is necessary for the in vitro assembly process of the 50S ribosomal subunit. It is not involved in the protein synthesizing functions of that subunit. The protein is Large ribosomal subunit protein bL20 of Synechococcus sp. (strain RCC307).